A 357-amino-acid chain; its full sequence is Chorismate synthase (357 aa).

Residues 38-49 (EKDIQPDLDRRK) are compositionally biased toward basic and acidic residues. The disordered stretch occupies residues 38–60 (EKDIQPDLDRRKPGTSRYTTPRR). Residues R48 and R54 each contribute to the NADP(+) site. FMN contacts are provided by residues 125-127 (RSS), 243-244 (NA), G283, 298-302 (KPTSS), and R324.

It belongs to the chorismate synthase family. As to quaternary structure, homotetramer. FMNH2 is required as a cofactor.

The enzyme catalyses 5-O-(1-carboxyvinyl)-3-phosphoshikimate = chorismate + phosphate. It functions in the pathway metabolic intermediate biosynthesis; chorismate biosynthesis; chorismate from D-erythrose 4-phosphate and phosphoenolpyruvate: step 7/7. In terms of biological role, catalyzes the anti-1,4-elimination of the C-3 phosphate and the C-6 proR hydrogen from 5-enolpyruvylshikimate-3-phosphate (EPSP) to yield chorismate, which is the branch point compound that serves as the starting substrate for the three terminal pathways of aromatic amino acid biosynthesis. This reaction introduces a second double bond into the aromatic ring system. The protein is Chorismate synthase of Haemophilus influenzae (strain PittEE).